The chain runs to 391 residues: Acetate kinase (391 aa).

Asparagine 7 provides a ligand contact to Mg(2+). Lysine 14 is an ATP binding site. Arginine 88 provides a ligand contact to substrate. Catalysis depends on aspartate 145, which acts as the Proton donor/acceptor. ATP is bound by residues 203–207 (HAGNG), 278–280 (DAR), and 326–330 (GMGEN). Mg(2+) is bound at residue glutamate 378.

It belongs to the acetokinase family. As to quaternary structure, homodimer. The cofactor is Mg(2+). It depends on Mn(2+) as a cofactor.

It localises to the cytoplasm. The catalysed reaction is acetate + ATP = acetyl phosphate + ADP. It functions in the pathway metabolic intermediate biosynthesis; acetyl-CoA biosynthesis; acetyl-CoA from acetate: step 1/2. Its function is as follows. Catalyzes the formation of acetyl phosphate from acetate and ATP. Can also catalyze the reverse reaction. This is Acetate kinase from Phytoplasma mali (strain AT).